A 512-amino-acid polypeptide reads, in one-letter code: Proline--tRNA ligase (512 aa).

Residues 460–470 (SDEDDEQDTTD) show a composition bias toward acidic residues. The segment at 460 to 484 (SDEDDEQDTTDENMGVNNDTTVESN) is disordered.

The protein belongs to the class-II aminoacyl-tRNA synthetase family. ProS type 3 subfamily. In terms of assembly, homodimer.

It is found in the cytoplasm. It catalyses the reaction tRNA(Pro) + L-proline + ATP = L-prolyl-tRNA(Pro) + AMP + diphosphate. Functionally, catalyzes the attachment of proline to tRNA(Pro) in a two-step reaction: proline is first activated by ATP to form Pro-AMP and then transferred to the acceptor end of tRNA(Pro). The sequence is that of Proline--tRNA ligase from Haloquadratum walsbyi (strain DSM 16790 / HBSQ001).